The sequence spans 222 residues: MSVLLNRDVLTSKIAEALKAGKPRRFRQSVELIVVLRELDLSKPENRINLLVELPHPPKANKIAAFAHGVFEVNAKNAGVDAIITRDQIESLSGNKRAIRKLAKQYDFFIAPPDLMPLLGRVVGPIFGPRGKMPEVVPPNVDVKSVVERLRRSVRVRIRNEPVIKVRVGAEGQDQKEILANILTVLEEINRKFSLKQYLKEIYVKKTMGPPIKIRAVEVLSR.

Belongs to the universal ribosomal protein uL1 family. In terms of assembly, part of the 50S ribosomal subunit.

In terms of biological role, binds directly to 23S rRNA. Probably involved in E site tRNA release. Protein L1 is also a translational repressor protein, it controls the translation of its operon by binding to its mRNA. This is Large ribosomal subunit protein uL1 from Pyrobaculum arsenaticum (strain DSM 13514 / JCM 11321 / PZ6).